The chain runs to 96 residues: NADH-ubiquinone oxidoreductase chain 4L (96 aa).

Transmembrane regions (helical) follow at residues 2–22 (IMFL…FCFV), 28–48 (LLSM…MLFI), and 62–82 (MFLT…VSMI).

Belongs to the complex I subunit 4L family.

It localises to the mitochondrion membrane. It carries out the reaction a ubiquinone + NADH + 5 H(+)(in) = a ubiquinol + NAD(+) + 4 H(+)(out). Functionally, core subunit of the mitochondrial membrane respiratory chain NADH dehydrogenase (Complex I) that is believed to belong to the minimal assembly required for catalysis. Complex I functions in the transfer of electrons from NADH to the respiratory chain. The immediate electron acceptor for the enzyme is believed to be ubiquinone. This is NADH-ubiquinone oxidoreductase chain 4L (mt:ND4L) from Drosophila nasuta F (Fruit fly).